The following is a 2723-amino-acid chain: Zinc finger protein 292 (2723 aa).

A C2H2-type 1 zinc finger spans residues 569–591 (YSCPICAKNFNSKETFVPHVTLH). A disordered region spans residues 608–633 (RLGRPPKITTTNENQKTNTVAKQEQR). A compositionally biased stretch (polar residues) spans 615–629 (ITTTNENQKTNTVAK). Residue Ser654 is modified to Phosphoserine. 5 C2H2-type zinc fingers span residues 681 to 705 (FNCP…VKGH), 722 to 744 (VICQ…LQMH), 750 to 774 (YICI…RKEH), 779 to 803 (AKCM…EAQH), and 807 to 831 (YTCK…LDDH). The segment covering 825–834 (EKHLDDHSTP) has biased composition (basic and acidic residues). Residues 825–860 (EKHLDDHSTPPEKVLPPEAQLNSSGDSIQPSEVNQN) form a disordered region. Polar residues predominate over residues 844-860 (QLNSSGDSIQPSEVNQN). The segment at 1098 to 1123 (FSCQVEGCTRTYNSSQSIGKHMKTAH) adopts a C2H2-type 7 zinc-finger fold. Lys1117 carries the N6-acetyllysine modification. Phosphoserine is present on Ser1159. The segment at 1331–1364 (SSTNAQQSAPEKVKKDRGRGPNGKERKPKHNKRA) is disordered. A compositionally biased stretch (basic and acidic residues) spans 1341 to 1355 (EKVKKDRGRGPNGKE). The C2H2-type 8; degenerate zinc-finger motif lies at 1375 to 1397 (FICSRCYRAFTNPRSLGGHLSKR). Positions 1588–1627 (SFPNSGGPSQNFTSNSSRVSVISGPQNTRSSHLNKKGNSA) are enriched in polar residues. The tract at residues 1588-1634 (SFPNSGGPSQNFTSNSSRVSVISGPQNTRSSHLNKKGNSASKRRKKV) is disordered. Residues 1827–1854 (QSEVSHKEDQIQEILEGLQKLKLENDLS) are a coiled coil. 2 consecutive C2H2-type zinc fingers follow at residues 1902 to 1927 (FVCQ…GKIH) and 1947 to 1972 (FKCV…QLVH). The interval 1986–2023 (RPYGRKSQSENVPASRSTQVKKQLAMTEENKKESQPAL) is disordered. The span at 1994 to 2006 (SENVPASRSTQVK) shows a compositional bias: polar residues. Position 2042 is an N6-acetyllysine (Lys2042). Positions 2074-2103 (NTQTKGRKIRRHKKEKEEKKRKKPVSQSLE) are disordered. The segment covering 2078-2097 (KGRKIRRHKKEKEEKKRKKP) has biased composition (basic residues). 4 consecutive C2H2-type zinc fingers follow at residues 2114–2139 (YRCV…QAVH), 2172–2197 (FRCQ…MKLH), 2216–2241 (FPCD…EADH), and 2256–2281 (YKCD…FNKH). 2 stretches are compositionally biased toward basic residues: residues 2285–2294 (HKAHLIRPRR) and 2312–2322 (KSKHRGTKHSR). The tract at residues 2285–2345 (HKAHLIRPRR…KKKNNLENKN (61 aa)) is disordered. A C2H2-type 15 zinc finger spans residues 2386–2410 (YPCMIKGCTSVVTSESNIIRHYKCH). The segment covering 2441–2452 (QEGAKNDVKDSD) has biased composition (basic and acidic residues). Disordered regions lie at residues 2441 to 2480 (QEGA…EKDE), 2530 to 2564 (LKRV…VRKE), and 2606 to 2631 (QKKN…RKNI). The span at 2453 to 2470 (TCVSESNDNSRTTATVSQ) shows a compositional bias: polar residues. Residues 2606–2615 (QKKNTDKDHP) show a composition bias toward basic and acidic residues.

The protein belongs to the krueppel C2H2-type zinc-finger protein family.

The protein resides in the nucleus. Its function is as follows. May be involved in transcriptional regulation. This chain is Zinc finger protein 292 (ZNF292), found in Homo sapiens (Human).